A 273-amino-acid chain; its full sequence is Dermonecrotic toxin LruSicTox-alphaIC1c (273 aa).

Residue H5 is part of the active site. Residues E25 and D27 each contribute to the Mg(2+) site. Catalysis depends on H41, which acts as the Nucleophile. 2 disulfides stabilise this stretch: C45-C51 and C47-C190. D85 contributes to the Mg(2+) binding site.

Belongs to the arthropod phospholipase D family. Class II subfamily. It depends on Mg(2+) as a cofactor. Expressed by the venom gland.

It is found in the secreted. The enzyme catalyses an N-(acyl)-sphingosylphosphocholine = an N-(acyl)-sphingosyl-1,3-cyclic phosphate + choline. It catalyses the reaction an N-(acyl)-sphingosylphosphoethanolamine = an N-(acyl)-sphingosyl-1,3-cyclic phosphate + ethanolamine. It carries out the reaction a 1-acyl-sn-glycero-3-phosphocholine = a 1-acyl-sn-glycero-2,3-cyclic phosphate + choline. The catalysed reaction is a 1-acyl-sn-glycero-3-phosphoethanolamine = a 1-acyl-sn-glycero-2,3-cyclic phosphate + ethanolamine. Dermonecrotic toxins cleave the phosphodiester linkage between the phosphate and headgroup of certain phospholipids (sphingolipid and lysolipid substrates), forming an alcohol (often choline) and a cyclic phosphate. This toxin acts on sphingomyelin (SM). It may also act on ceramide phosphoethanolamine (CPE), lysophosphatidylcholine (LPC) and lysophosphatidylethanolamine (LPE), but not on lysophosphatidylserine (LPS), and lysophosphatidylglycerol (LPG). It acts by transphosphatidylation, releasing exclusively cyclic phosphate products as second products. Induces dermonecrosis, hemolysis, increased vascular permeability, edema, inflammatory response, and platelet aggregation. The chain is Dermonecrotic toxin LruSicTox-alphaIC1c from Loxosceles rufescens (Mediterranean recluse spider).